The primary structure comprises 151 residues: Macrodomain Ter protein (151 aa).

Belongs to the MatP family. Homodimer.

It is found in the cytoplasm. Its function is as follows. Required for spatial organization of the terminus region of the chromosome (Ter macrodomain) during the cell cycle. Prevents early segregation of duplicated Ter macrodomains during cell division. Binds specifically to matS, which is a 13 bp signature motif repeated within the Ter macrodomain. The polypeptide is Macrodomain Ter protein (Yersinia enterocolitica serotype O:8 / biotype 1B (strain NCTC 13174 / 8081)).